The sequence spans 453 residues: Glutamyl-tRNA reductase (453 aa).

Substrate is bound by residues 52 to 55, serine 105, 110 to 112, and glutamine 116; these read TCNR and EDQ. Catalysis depends on cysteine 53, which acts as the Nucleophile. 184 to 189 contacts NADP(+); it reads GAGEMA. Residues 413 to 424 show a composition bias toward low complexity; it reads PGLEPEPTELPT. Positions 413-453 are disordered; sequence PGLEPEPTELPTVPDGPEGVPEELRERMSSGMLEQFSTNDD.

The protein belongs to the glutamyl-tRNA reductase family. Homodimer.

It catalyses the reaction (S)-4-amino-5-oxopentanoate + tRNA(Glu) + NADP(+) = L-glutamyl-tRNA(Glu) + NADPH + H(+). The protein operates within porphyrin-containing compound metabolism; protoporphyrin-IX biosynthesis; 5-aminolevulinate from L-glutamyl-tRNA(Glu): step 1/2. In terms of biological role, catalyzes the NADPH-dependent reduction of glutamyl-tRNA(Glu) to glutamate 1-semialdehyde (GSA). In Natronomonas pharaonis (strain ATCC 35678 / DSM 2160 / CIP 103997 / JCM 8858 / NBRC 14720 / NCIMB 2260 / Gabara) (Halobacterium pharaonis), this protein is Glutamyl-tRNA reductase.